Consider the following 126-residue polypeptide: uncharacterized protein (126 aa).

A signal peptide spans 1–27 (MKNLFIFLSLMMMFVLTACGGSKYDDA). Residues 93–126 (MTDMPGNGENDRLGLSKKTPDYEEVKGEETELEE) form a disordered region. A compositionally biased stretch (basic and acidic residues) spans 101–126 (ENDRLGLSKKTPDYEEVKGEETELEE).

This is an uncharacterized protein from Bacillus subtilis (strain 168).